Here is a 1315-residue protein sequence, read N- to C-terminus: ESX secretion system protein EccC (1315 aa).

Residues 1 to 11 (MSTVLVRRKER) show a composition bias toward basic residues. The disordered stretch occupies residues 1–21 (MSTVLVRRKERRQPPQMPRGE). Topologically, residues 1 to 40 (MSTVLVRRKERRQPPQMPRGEILLESPPELPEVVTNSFQN) are cytoplasmic. The chain crosses the membrane as a helical span at residues 41-61 (VLMYLPMAAGSAAMVFTFLNH). The Extracellular segment spans residues 62 to 64 (RNT). The helical transmembrane segment at 65–85 (LQLVAGGMFALSMFGMMFGQL) threads the bilayer. Over 86–1315 (SQQSGERKTK…RLIQTAYRES (1230 aa)) the chain is Cytoplasmic. FtsK domains are found at residues 456–656 (GRPL…MESR) and 813–1004 (RDPY…YESE). 479-486 (GATGSGKS) contributes to the ATP binding site. The active site involves E593. Residues 721–1315 (RPQVVEQPQP…RLIQTAYRES (595 aa)) are binds EsxB. ATP-binding positions include 834-839 (QTGKST), T1031, 1119-1124 (ECGKSN), Q1293, and 1310-1311 (TA). The 184-residue stretch at 1099 to 1282 (LSPVYLDFNT…MSGNKDEGIL (184 aa)) folds into the FtsK 3 domain.

As to quaternary structure, the cytosolic domain can form homodimers. Binds EsxB, which leads to multimerization, however EsxA disassembles the multimers, possibly by making EccC-EsxA-EsxB trimers instead of EccC-EsxB-EsxB-EccC tetramers. Forms a complex with EsxA and EsxB, probably wholly mediated by EsxB.

The protein localises to the cell membrane. With respect to regulation, esxB binding to the third FtsK domain causes multimerization; a subsequent unknown step relieves the allosteric inhibition of linker 2 on FtsK domain 1, activating the ATPase activity; a mutant EsxB ('Ala-98') does not cause multimers to form. Functionally, part of the ESX specialized secretion system, which exports proteins from the cell including EsxA (ESAT-6) and EsxB (CFP-10). Has weak intrinsic ATPase activity; probably only the first FtsK domain can hydrolyze ATP. Might be the translocase subunit. The chain is ESX secretion system protein EccC from Thermomonospora curvata (strain ATCC 19995 / DSM 43183 / JCM 3096 / KCTC 9072 / NBRC 15933 / NCIMB 10081 / Henssen B9).